We begin with the raw amino-acid sequence, 262 residues long: Small ribosomal subunit protein uS2 (262 aa).

This sequence belongs to the universal ribosomal protein uS2 family.

This chain is Small ribosomal subunit protein uS2, found in Rhodospirillum rubrum (strain ATCC 11170 / ATH 1.1.1 / DSM 467 / LMG 4362 / NCIMB 8255 / S1).